A 273-amino-acid chain; its full sequence is Protein FAM210A (273 aa).

The tract at residues 94–116 (RVLSSSSTSQETPSEKKEETDPL) is disordered. A compositionally biased stretch (basic and acidic residues) spans 106-116 (PSEKKEETDPL). The 113-residue stretch at 118-230 (DKSISLYQRF…GYMSTPPPVK (113 aa)) folds into the DUF1279 domain. Residues 138–158 (LIPVHLITSGIWFGTFYYATI) traverse the membrane as a helical segment. Residues 233–269 (LQGRMEETKELITEKMEETKDRLTEKLQETKGKVSFK) are a coiled coil.

It belongs to the FAM210 family. In terms of assembly, interacts with ATAD3A. In terms of tissue distribution, expressed in skeletal muscle, heart, brain but not in bone.

It is found in the membrane. The protein resides in the mitochondrion. The protein localises to the cytoplasm. Functionally, may play a role in the structure and strength of both muscle and bone. In Mus musculus (Mouse), this protein is Protein FAM210A (Fam210a).